The sequence spans 249 residues: Homeobox protein TGIF2LX (249 aa).

Disordered regions lie at residues 1-65 (MEAA…GYSP) and 126-199 (DPIV…PKKK). A compositionally biased stretch (basic and acidic residues) spans 9–27 (AETRSRVEKDSRRAIKDSP). Residues 28-46 (AKTQSPAQDTSIMLRNNAD) are compositionally biased toward polar residues. A DNA-binding region (homeobox; TALE-type) is located at residues 55 to 118 (EHKKKRKGYS…INARRRILPD (64 aa)). Positions 159–172 (DNVQSLPLRSSPKG) are enriched in polar residues.

It belongs to the TALE/TGIF homeobox family.

It is found in the nucleus. Functionally, may have a transcription role in testis. This Macaca mulatta (Rhesus macaque) protein is Homeobox protein TGIF2LX (TGIF2LX).